Reading from the N-terminus, the 309-residue chain is Ribonuclease Z (309 aa).

Residues His63, His65, Asp67, His68, His141, Asp208, and His266 each contribute to the Zn(2+) site. The active-site Proton acceptor is Asp67.

Belongs to the RNase Z family. As to quaternary structure, homodimer. The cofactor is Zn(2+).

The catalysed reaction is Endonucleolytic cleavage of RNA, removing extra 3' nucleotides from tRNA precursor, generating 3' termini of tRNAs. A 3'-hydroxy group is left at the tRNA terminus and a 5'-phosphoryl group is left at the trailer molecule.. Its function is as follows. Zinc phosphodiesterase, which displays some tRNA 3'-processing endonuclease activity. Probably involved in tRNA maturation, by removing a 3'-trailer from precursor tRNA. This Salinispora arenicola (strain CNS-205) protein is Ribonuclease Z.